The primary structure comprises 300 residues: E3 ubiquitin-protein ligase RNF212B (300 aa).

An RING-type zinc finger spans residues 6–40 (CNQCFRKDGAHFFVTSCGHIFCKKCVTLEKCAVCG). The stretch at 88-124 (LIAFYKHRITKLETAMQETQQALVSQDKELSVLRKEN) forms a coiled coil. Disordered stretches follow at residues 141 to 251 (YQGS…HTRV) and 280 to 300 (PYQQQRQMGLPSGREAWTTSR). Residues 155–169 (TSPSQSVTPRPSFQH) are compositionally biased toward polar residues. A compositionally biased stretch (low complexity) spans 170–183 (SSQVVSRSSSVESV). Residues 191 to 200 (GSLGQGGRGL) are compositionally biased toward gly residues. The segment covering 211 to 234 (NETPSPASTHSLSYRPSSASSGQG) has biased composition (polar residues).

As to quaternary structure, homodimer. In terms of processing, autoubiquitinated.

The protein localises to the chromosome. It carries out the reaction S-ubiquitinyl-[E2 ubiquitin-conjugating enzyme]-L-cysteine + [acceptor protein]-L-lysine = [E2 ubiquitin-conjugating enzyme]-L-cysteine + N(6)-ubiquitinyl-[acceptor protein]-L-lysine.. Its pathway is protein modification; protein ubiquitination. In terms of biological role, ubiquitin E3 ligase that acts as a crucial factor for crossing-over (CO) formation during meiosis. Essential for normal prophase I progression and for ensuring appropriate CO designation in meiosis. Recruits key components of the cross-over machinery either directly ou indirectly, leading to the activation of the MutL-gamma complex. The function of RNF212B in CO designation is dependent on its catalytic activity. In Pongo abelii (Sumatran orangutan), this protein is E3 ubiquitin-protein ligase RNF212B (RNF212B).